Consider the following 1045-residue polypeptide: Protein phosphatase Slingshot (1045 aa).

The span at 1–20 (MALVTVQRSPSVAGSCSNSD) shows a compositional bias: polar residues. Disordered stretches follow at residues 1–35 (MALVTVQRSPSVAGSCSNSDGESEDDEGNSKGNDR), 58–80 (TQSERRLSTDSTRSSNSTQSNNS), 143–194 (KVGG…DNKN), and 306–325 (ESRRPPSPDAIRNKPPEKEE). Residues 66-80 (TDSTRSSNSTQSNNS) are compositionally biased toward low complexity. A compositionally biased stretch (polar residues) spans 149-174 (GTKSSTSPAVPTQRQLSVEQTATEAS). The segment covering 175-185 (SKCDKTADKEN) has biased composition (basic and acidic residues). The 56-residue stretch at 324–379 (EETESVIKMKLKAIMMSVDLDEVTSKYIRGRLEEILDMDLGEYKSFIDAEMLVILG) folds into the DEK-C domain. The region spanning 383-524 (APTKIFEHVY…LETYSGMLDA (142 aa)) is the Tyrosine-protein phosphatase domain. Catalysis depends on C468, which acts as the Phosphocysteine intermediate. Basic and acidic residues predominate over residues 529 to 547 (EKLQRSKSETNLKSTKDAR). Disordered regions lie at residues 529-631 (EKLQ…PERS), 699-799 (SHLG…GDNR), and 1001-1045 (ACSA…SDSS). Residues 560 to 569 (ALNQAKSKST) are compositionally biased toward polar residues. A compositionally biased stretch (basic residues) spans 586-601 (MHRRSIAQKSQRRMVR). The span at 602 to 625 (RSSSTSPKTQTAVVTKQQSQSMEN) shows a compositional bias: polar residues. The span at 704–713 (SVSGSSSGNI) shows a compositional bias: low complexity. S719 is modified (phosphoserine). Residues 721–732 (CSDVFSSQVDSV) show a composition bias toward low complexity. Polar residues-rich tracts occupy residues 764–774 (TPQQQKQQSNA) and 1008–1021 (KKTTSHQSLPSSPV). The span at 1029–1045 (SAASNSNSSASNSSDSS) shows a compositional bias: low complexity.

It belongs to the protein-tyrosine phosphatase family. As to quaternary structure, interacts with actin.

It is found in the cytoplasm. It localises to the cytoskeleton. The enzyme catalyses O-phospho-L-tyrosyl-[protein] + H2O = L-tyrosyl-[protein] + phosphate. The catalysed reaction is O-phospho-L-seryl-[protein] + H2O = L-seryl-[protein] + phosphate. It catalyses the reaction O-phospho-L-threonyl-[protein] + H2O = L-threonyl-[protein] + phosphate. In terms of biological role, protein phosphatase which regulates actin filament dynamics. Dephosphorylates and activates the actin binding/depolymerizing factor tsr/cofilin, which subsequently binds to actin filaments and stimulates their disassembly. Required for axon growth. This is Protein phosphatase Slingshot (ssh) from Drosophila melanogaster (Fruit fly).